We begin with the raw amino-acid sequence, 378 residues long: Chaperone protein DnaJ (378 aa).

Residues D5 to G70 enclose the J domain. The CR-type zinc-finger motif lies at G138–T216. C151, C154, C168, C171, C190, C193, C204, and C207 together coordinate Zn(2+). CXXCXGXG motif repeat units lie at residues C151–G158, C168–G175, C190–G197, and C204–G211.

This sequence belongs to the DnaJ family. Homodimer. It depends on Zn(2+) as a cofactor.

Its subcellular location is the cytoplasm. Functionally, participates actively in the response to hyperosmotic and heat shock by preventing the aggregation of stress-denatured proteins and by disaggregating proteins, also in an autonomous, DnaK-independent fashion. Unfolded proteins bind initially to DnaJ; upon interaction with the DnaJ-bound protein, DnaK hydrolyzes its bound ATP, resulting in the formation of a stable complex. GrpE releases ADP from DnaK; ATP binding to DnaK triggers the release of the substrate protein, thus completing the reaction cycle. Several rounds of ATP-dependent interactions between DnaJ, DnaK and GrpE are required for fully efficient folding. Also involved, together with DnaK and GrpE, in the DNA replication of plasmids through activation of initiation proteins. In Burkholderia cenocepacia (strain HI2424), this protein is Chaperone protein DnaJ.